A 476-amino-acid chain; its full sequence is ATP synthase subunit beta (476 aa).

152 to 159 is a binding site for ATP; sequence GGAGVGKT.

It belongs to the ATPase alpha/beta chains family. As to quaternary structure, F-type ATPases have 2 components, CF(1) - the catalytic core - and CF(0) - the membrane proton channel. CF(1) has five subunits: alpha(3), beta(3), gamma(1), delta(1), epsilon(1). CF(0) has three main subunits: a(1), b(2) and c(9-12). The alpha and beta chains form an alternating ring which encloses part of the gamma chain. CF(1) is attached to CF(0) by a central stalk formed by the gamma and epsilon chains, while a peripheral stalk is formed by the delta and b chains.

Its subcellular location is the cell inner membrane. The catalysed reaction is ATP + H2O + 4 H(+)(in) = ADP + phosphate + 5 H(+)(out). In terms of biological role, produces ATP from ADP in the presence of a proton gradient across the membrane. The catalytic sites are hosted primarily by the beta subunits. This chain is ATP synthase subunit beta, found in Granulibacter bethesdensis (strain ATCC BAA-1260 / CGDNIH1).